The chain runs to 250 residues: tRNA (guanine-N(1)-)-methyltransferase (250 aa).

S-adenosyl-L-methionine contacts are provided by residues glycine 112 and 132–137 (IGDFVL).

This sequence belongs to the RNA methyltransferase TrmD family. In terms of assembly, homodimer.

It is found in the cytoplasm. The enzyme catalyses guanosine(37) in tRNA + S-adenosyl-L-methionine = N(1)-methylguanosine(37) in tRNA + S-adenosyl-L-homocysteine + H(+). In terms of biological role, specifically methylates guanosine-37 in various tRNAs. The sequence is that of tRNA (guanine-N(1)-)-methyltransferase from Marinomonas sp. (strain MWYL1).